We begin with the raw amino-acid sequence, 443 residues long: Phosphoribosylamine--glycine ligase (443 aa).

Residues 109–324 (RNLFKKYNIK…FLDVCFGISN (216 aa)) form the ATP-grasp domain. ATP is bound at residue 140 to 202 (MTGLGKDVVV…EEKLVGVEFT (63 aa)). Residues Gln-282, Glu-294, and Asn-296 each contribute to the Mg(2+) site. Mn(2+)-binding residues include Gln-282, Glu-294, and Asn-296.

This sequence belongs to the GARS family. Mg(2+) serves as cofactor. Mn(2+) is required as a cofactor.

It carries out the reaction 5-phospho-beta-D-ribosylamine + glycine + ATP = N(1)-(5-phospho-beta-D-ribosyl)glycinamide + ADP + phosphate + H(+). It functions in the pathway purine metabolism; IMP biosynthesis via de novo pathway; N(1)-(5-phospho-D-ribosyl)glycinamide from 5-phospho-alpha-D-ribose 1-diphosphate: step 2/2. The polypeptide is Phosphoribosylamine--glycine ligase (Methanococcus vannielii (strain ATCC 35089 / DSM 1224 / JCM 13029 / OCM 148 / SB)).